Here is a 238-residue protein sequence, read N- to C-terminus: Auxin-responsive protein IAA2 (238 aa).

Residues 24–28 (LCLGL) carry the EAR-like (transcriptional repression) motif. Composition is skewed to low complexity over residues 33–44 (SSSSSSKPSEGS), 59–69 (ASKPSGAAAAA), and 85–94 (ASSSSSSSKQ). Disordered regions lie at residues 33 to 69 (SSSS…AAAA) and 82 to 114 (RNLA…KDGG). The 99-residue stretch at 118–216 (GMFVKINMDG…TAKRLRVLKS (99 aa)) folds into the PB1 domain. A disordered region spans residues 217–238 (SDLPPPSLMRAAGSRKRAAADS). Basic residues predominate over residues 229 to 238 (GSRKRAAADS).

It belongs to the Aux/IAA family. In terms of assembly, homodimers and heterodimers. Highly expressed in flowers.

The protein resides in the nucleus. Its function is as follows. Aux/IAA proteins are short-lived transcriptional factors that function as repressors of early auxin response genes at low auxin concentrations. This is Auxin-responsive protein IAA2 (IAA2) from Oryza sativa subsp. japonica (Rice).